The following is a 203-amino-acid chain: Hypoxanthine-guanine phosphoribosyltransferase (203 aa).

Positions 66 and 67 each coordinate diphosphate. Positions 122 and 123 each coordinate Mg(2+). The active-site Proton acceptor is D126. GMP contacts are provided by residues K154, 175 to 176 (FV), and D182. R188 serves as a coordination point for diphosphate.

This sequence belongs to the purine/pyrimidine phosphoribosyltransferase family. Mg(2+) serves as cofactor.

Its subcellular location is the cytoplasm. It carries out the reaction IMP + diphosphate = hypoxanthine + 5-phospho-alpha-D-ribose 1-diphosphate. It catalyses the reaction GMP + diphosphate = guanine + 5-phospho-alpha-D-ribose 1-diphosphate. Its pathway is purine metabolism; IMP biosynthesis via salvage pathway; IMP from hypoxanthine: step 1/1. The protein operates within purine metabolism; GMP biosynthesis via salvage pathway; GMP from guanine: step 1/1. In terms of biological role, purine salvage pathway enzyme that catalyzes the transfer of the ribosyl-5-phosphate group from 5-phospho-alpha-D-ribose 1-diphosphate (PRPP) to the N9 position of the 6-oxopurines hypoxanthine and guanine to form the corresponding ribonucleotides IMP (inosine 5'-monophosphate) and GMP (guanosine 5'-monophosphate), with the release of PPi. The chain is Hypoxanthine-guanine phosphoribosyltransferase (hpt) from Mycobacterium avium.